The following is a 227-amino-acid chain: MIDAFFIAGTDTDVGKTVASKAILQALGAKGLNTIGYKPVAAGSDKTAEGWRNSDALHLQKAATLDIAYDDVNPYALELPTSPHIAAKHEHVEIKYEVLSEKLAHHKEQSDIVLVEGAGGWRVPVSDTDSLSTWVQQEQLPVVLVVGIKLGCLSHALLTAEIIKADGLNLVGWVANRVNPGTEHYAEIIDMLEDRLDAPKLGEIPYIPSAKRKDLGKFINVEPLLNA.

An ATP-binding site is contributed by 13–18; sequence DVGKTV. Position 17 (Thr-17) interacts with Mg(2+). The active site involves Lys-38. Residues Asp-55, 116–119, 176–177, and 205–207 contribute to the ATP site; these read EGAG, NR, and PYI. The Mg(2+) site is built by Asp-55 and Glu-116.

This sequence belongs to the dethiobiotin synthetase family. Homodimer. Mg(2+) is required as a cofactor.

It localises to the cytoplasm. It carries out the reaction (7R,8S)-7,8-diammoniononanoate + CO2 + ATP = (4R,5S)-dethiobiotin + ADP + phosphate + 3 H(+). It functions in the pathway cofactor biosynthesis; biotin biosynthesis; biotin from 7,8-diaminononanoate: step 1/2. Functionally, catalyzes a mechanistically unusual reaction, the ATP-dependent insertion of CO2 between the N7 and N8 nitrogen atoms of 7,8-diaminopelargonic acid (DAPA, also called 7,8-diammoniononanoate) to form a ureido ring. This Vibrio campbellii (strain ATCC BAA-1116) protein is ATP-dependent dethiobiotin synthetase BioD.